A 534-amino-acid polypeptide reads, in one-letter code: CTP synthase (534 aa).

Residues 1-267 (MTKYIFVTGG…DQIVCDHLKL (267 aa)) are amidoligase domain. Serine 13 serves as a coordination point for CTP. Position 13 (serine 13) interacts with UTP. Residue 14 to 19 (SIGKGI) participates in ATP binding. Residue tyrosine 54 participates in L-glutamine binding. Aspartate 71 is a binding site for ATP. Mg(2+) contacts are provided by aspartate 71 and glutamate 141. Residues 148-150 (DIE), 188-193 (KTKPTQ), and lysine 224 contribute to the CTP site. UTP-binding positions include 188–193 (KTKPTQ) and lysine 224. Residue 240–242 (RDV) participates in ATP binding. A Glutamine amidotransferase type-1 domain is found at 292–534 (KIALVGKYVE…FVTAAIKNSN (243 aa)). Glycine 354 contacts L-glutamine. The active-site Nucleophile; for glutamine hydrolysis is cysteine 381. L-glutamine-binding positions include 382–385 (LGMQ), glutamate 405, and arginine 463. Residues histidine 508 and glutamate 510 contribute to the active site.

The protein belongs to the CTP synthase family. As to quaternary structure, homotetramer.

It carries out the reaction UTP + L-glutamine + ATP + H2O = CTP + L-glutamate + ADP + phosphate + 2 H(+). The catalysed reaction is L-glutamine + H2O = L-glutamate + NH4(+). The enzyme catalyses UTP + NH4(+) + ATP = CTP + ADP + phosphate + 2 H(+). It participates in pyrimidine metabolism; CTP biosynthesis via de novo pathway; CTP from UDP: step 2/2. With respect to regulation, allosterically activated by GTP, when glutamine is the substrate; GTP has no effect on the reaction when ammonia is the substrate. The allosteric effector GTP functions by stabilizing the protein conformation that binds the tetrahedral intermediate(s) formed during glutamine hydrolysis. Inhibited by the product CTP, via allosteric rather than competitive inhibition. Its function is as follows. Catalyzes the ATP-dependent amination of UTP to CTP with either L-glutamine or ammonia as the source of nitrogen. Regulates intracellular CTP levels through interactions with the four ribonucleotide triphosphates. This is CTP synthase from Streptococcus pyogenes serotype M1.